The primary structure comprises 425 residues: Arogenate dehydratase 5, chloroplastic (425 aa).

Residues 1 to 38 constitute a chloroplast transit peptide; that stretch reads MQTISPAFSCDLKSVIQPNLTAKKARYSHVNGKRVSVR. The 178-residue stretch at 127 to 304 folds into the Prephenate dehydratase domain; that stretch reads RVAYQGVPGA…NVTRFLMLAR (178 aa). Residues 320–411 enclose the ACT domain; sequence VFAAQEHKGT…SFLRVLGSYP (92 aa).

As to expression, expressed in roots, leaves, stems, flowers and siliques. More abundant in stems and roots.

The protein resides in the plastid. It is found in the chloroplast stroma. It carries out the reaction L-arogenate + H(+) = L-phenylalanine + CO2 + H2O. It functions in the pathway amino-acid biosynthesis; L-phenylalanine biosynthesis; L-phenylalanine from L-arogenate: step 1/1. Its function is as follows. Converts the prephenate produced from the shikimate-chorismate pathway into phenylalanine. This chain is Arogenate dehydratase 5, chloroplastic, found in Arabidopsis thaliana (Mouse-ear cress).